A 581-amino-acid polypeptide reads, in one-letter code: Chaperonin GroEL 1 (581 aa).

ATP contacts are provided by residues 29–32 (TIGP), 86–90 (DGTTT), G413, and D492. A disordered region spans residues 522-541 (PEPEAAGPGGPGADPMGGMG). Gly residues predominate over residues 528 to 541 (GPGGPGADPMGGMG).

This sequence belongs to the chaperonin (HSP60) family. Forms a cylinder of 14 subunits composed of two heptameric rings stacked back-to-back. Interacts with the co-chaperonin GroES.

The protein resides in the cytoplasm. The catalysed reaction is ATP + H2O + a folded polypeptide = ADP + phosphate + an unfolded polypeptide.. Together with its co-chaperonin GroES, plays an essential role in assisting protein folding. The GroEL-GroES system forms a nano-cage that allows encapsulation of the non-native substrate proteins and provides a physical environment optimized to promote and accelerate protein folding. In Prochlorococcus marinus (strain MIT 9301), this protein is Chaperonin GroEL 1.